We begin with the raw amino-acid sequence, 284 residues long: GPN-loop GTPase 3 (284 aa).

13-18 (GSGKST) lines the GTP pocket. A Gly-Pro-Asn (GPN)-loop; involved in dimer interface motif is present at residues 72–74 (GPN). 174–177 (TKMD) is a GTP binding site. The tract at residues 262–284 (EPREHEEESSSMFDEYFQERQNE) is disordered.

It belongs to the GPN-loop GTPase family. In terms of assembly, heterodimer with GPN1. Binds to RNA polymerase II (RNAPII). Interacts directly with subunits RPB4 and RPB7 and the CTD of RPB1.

Its function is as follows. Small GTPase required for proper localization of RNA polymerase II (RNAPII). May act at an RNAP assembly step prior to nuclear import. The sequence is that of GPN-loop GTPase 3 from Mus musculus (Mouse).